The sequence spans 1171 residues: ATP-dependent helicase/deoxyribonuclease subunit B (1171 aa).

A UvrD-like helicase ATP-binding domain is found at 1-343; sequence MSLRFVIGRA…LVAEENYRYR (343 aa). Residue 8–15 participates in ATP binding; the sequence is GRAGSGKS. Residues 281 to 587 form the UvrD-like helicase C-terminal domain; sequence MEQPRFHSPA…QFANIPPSLD (307 aa). Cys-805, Cys-1129, Cys-1132, and Cys-1138 together coordinate [4Fe-4S] cluster.

It belongs to the helicase family. AddB/RexB type 1 subfamily. As to quaternary structure, heterodimer of AddA and AddB. Requires Mg(2+) as cofactor. The cofactor is [4Fe-4S] cluster.

In terms of biological role, the heterodimer acts as both an ATP-dependent DNA helicase and an ATP-dependent, dual-direction single-stranded exonuclease. Recognizes the chi site generating a DNA molecule suitable for the initiation of homologous recombination. The AddB subunit has 5' -&gt; 3' nuclease activity but not helicase activity. The protein is ATP-dependent helicase/deoxyribonuclease subunit B of Bacillus anthracis.